Consider the following 395-residue polypeptide: Probable G-protein coupled receptor npr-29 (395 aa).

Transmembrane regions (helical) follow at residues 38 to 58 (VVGFVINAWVLYVVAPLLFAP), 66 to 86 (ILFYIFALCVGDLMTMIAMLL), 89 to 109 (IELVFGTWQFSSMVCTSYLIF), and 148 to 168 (AIIQFCIAFAFVMILLWPVFA). Asn-180 carries an N-linked (GlcNAc...) asparagine glycan. 3 helical membrane-spanning segments follow: residues 202–222 (FWFNLIACITSYAVPLFGIIY), 252–272 (VITTVLLLTVIYVLCWTPYWV), and 287–307 (IIIISYFIHLLPYISCVAYPL).

It belongs to the G-protein coupled receptor 1 family.

It is found in the cell membrane. Its function is as follows. Not known. Putative receptor. The polypeptide is Probable G-protein coupled receptor npr-29 (Caenorhabditis elegans).